The following is a 210-amino-acid chain: Putative RING-H2 finger protein ATL50 (210 aa).

Residues 35–55 (IVLLYITLLSIIFFVAALIHL) form a helical membrane-spanning segment. Residues 122–164 (CAVCLREFTAEDELRLLPKCSHAFHVECIDTWLLTNSTCPLCR) form an RING-type; atypical zinc finger. Residues 187–210 (SDGDNSQDSDSSFMLTDLDDVESK) are disordered.

It belongs to the RING-type zinc finger family. ATL subfamily.

The protein resides in the membrane. The enzyme catalyses S-ubiquitinyl-[E2 ubiquitin-conjugating enzyme]-L-cysteine + [acceptor protein]-L-lysine = [E2 ubiquitin-conjugating enzyme]-L-cysteine + N(6)-ubiquitinyl-[acceptor protein]-L-lysine.. It functions in the pathway protein modification; protein ubiquitination. This chain is Putative RING-H2 finger protein ATL50 (ATL50), found in Arabidopsis thaliana (Mouse-ear cress).